Here is a 431-residue protein sequence, read N- to C-terminus: Serine--tRNA ligase (431 aa).

238 to 240 provides a ligand contact to L-serine; the sequence is TAE. ATP is bound at residue 269 to 271; the sequence is RSE. L-serine is bound at residue Glu-292. 356 to 359 is an ATP binding site; sequence EISS. Ser-392 contributes to the L-serine binding site.

Belongs to the class-II aminoacyl-tRNA synthetase family. Type-1 seryl-tRNA synthetase subfamily. As to quaternary structure, homodimer. The tRNA molecule binds across the dimer.

The protein localises to the cytoplasm. The catalysed reaction is tRNA(Ser) + L-serine + ATP = L-seryl-tRNA(Ser) + AMP + diphosphate + H(+). The enzyme catalyses tRNA(Sec) + L-serine + ATP = L-seryl-tRNA(Sec) + AMP + diphosphate + H(+). It participates in aminoacyl-tRNA biosynthesis; selenocysteinyl-tRNA(Sec) biosynthesis; L-seryl-tRNA(Sec) from L-serine and tRNA(Sec): step 1/1. Functionally, catalyzes the attachment of serine to tRNA(Ser). Is also able to aminoacylate tRNA(Sec) with serine, to form the misacylated tRNA L-seryl-tRNA(Sec), which will be further converted into selenocysteinyl-tRNA(Sec). The polypeptide is Serine--tRNA ligase (Pectobacterium atrosepticum (strain SCRI 1043 / ATCC BAA-672) (Erwinia carotovora subsp. atroseptica)).